A 580-amino-acid polypeptide reads, in one-letter code: M-phase inducer phosphatase 2 (580 aa).

Residues 1–24 (MEVPQPEPAPGSALSPAGVCGGAQ) form a disordered region. Residue Ser-42 is modified to Phosphoserine. Positions 89–107 (SLSRRASESSLSSESSESS) are enriched in low complexity. 2 disordered regions span residues 89–117 (SLSR…DSPS) and 165–196 (NITN…ENDG). Phosphoserine; by MELK is present on Ser-169. Ser-249 carries the post-translational modification Phosphoserine. Ser-323 carries the phosphoserine; by MELK and MAPK14 modification. Residues 331 to 370 (PILKRLERPQDRDTPVQNKRRRSVTPPEEQQEAEEPKARV) are disordered. Positions 334–344 (KRLERPQDRDT) are enriched in basic and acidic residues. Phosphoserine; by AURKA is present on Ser-353. Ser-375 carries the phosphoserine; by BRSK1 and MAPK14 modification. A Rhodanese domain is found at 431-538 (IVDKFVIVDC…FFPQHPNFCE (108 aa)). Ser-470 bears the Phosphoserine mark. Cys-487 is an active-site residue. Position 563 is a phosphoserine (Ser-563).

Belongs to the MPI phosphatase family. As to quaternary structure, interacts with MAPK14 and 14-3-3 proteins. Post-translationally, phosphorylated by BRSK1 in vitro. Phosphorylated by CHEK1, which inhibits the activity of this protein. Phosphorylation at Ser-353 by AURKA might locally participate in the control of the onset of mitosis. Phosphorylation by MELK at Ser-169 promotes localization to the centrosome and the spindle poles during mitosis. Phosphorylation at Ser-323 and Ser-375 by MAPK14 is required for binding to 14-3-3 proteins.

It is found in the cytoplasm. The protein localises to the cytoskeleton. The protein resides in the microtubule organizing center. Its subcellular location is the centrosome. It localises to the spindle pole. The catalysed reaction is O-phospho-L-tyrosyl-[protein] + H2O = L-tyrosyl-[protein] + phosphate. Its activity is regulated as follows. Stimulated by B-type cyclins. Functionally, tyrosine protein phosphatase which functions as a dosage-dependent inducer of mitotic progression. Directly dephosphorylates CDK1 and stimulates its kinase activity. Required for G2/M phases of the cell cycle progression and abscission during cytokinesis in a ECT2-dependent manner. The three isoforms seem to have a different level of activity. In Homo sapiens (Human), this protein is M-phase inducer phosphatase 2 (CDC25B).